The sequence spans 21 residues: Peptide PGLa-R2 (21 aa).

Leu21 carries the leucine amide modification.

Expressed by the skin glands.

The protein resides in the secreted. Antimicrobial peptide. This chain is Peptide PGLa-R2, found in Xenopus ruwenzoriensis (Uganda clawed frog).